Consider the following 62-residue polypeptide: UPF0434 protein FTL_1400 (62 aa).

Belongs to the UPF0434 family.

This Francisella tularensis subsp. holarctica (strain LVS) protein is UPF0434 protein FTL_1400.